Reading from the N-terminus, the 247-residue chain is Syntaxin-like protein fsv1 (247 aa).

Positions 27–94 (NPDEEIESSL…FEKQRRASSI (68 aa)) form a coiled coil. Positions 88 to 130 (QRRASSIPADGTSAFSANPQVASTNNKLTPLPSLQKTTSSSEG) are disordered. The span at 100–130 (SAFSANPQVASTNNKLTPLPSLQKTTSSSEG) shows a compositional bias: polar residues. Residues 159–221 (QQMLNEQEES…DHAKNRLNKV (63 aa)) enclose the t-SNARE coiled-coil homology domain.

Its subcellular location is the golgi apparatus membrane. It is found in the prevacuolar compartment membrane. Its function is as follows. Involved in vesicle-mediated protein transport between the Golgi and the vacuole. This chain is Syntaxin-like protein fsv1 (fsv1), found in Schizosaccharomyces pombe (strain 972 / ATCC 24843) (Fission yeast).